Reading from the N-terminus, the 65-residue chain is MNKVYLVAILVLSVLLVANVSPIEGVPTGGCPLSDALCAKYCKSNKYGKTGKCTGTSKGTCKCLV.

Positions 1-25 (MNKVYLVAILVLSVLLVANVSPIEG) are cleaved as a signal peptide. 3 cysteine pairs are disulfide-bonded: C31–C53, C38–C61, and C42–C63.

This sequence belongs to the short scorpion toxin superfamily. Potassium channel inhibitor family. Alpha-KTx 11 subfamily. As to expression, expressed by the venom gland.

It localises to the secreted. Functionally, this recombinant toxin inhibits the mammalian voltage-gated potassium channels Kv1.3/KCNA3 in vitro with an IC(50) of 26.40 nM. This chain is Putative potassium channel toxin Ts21, found in Tityus serrulatus (Brazilian scorpion).